Reading from the N-terminus, the 144-residue chain is Mediator of RNA polymerase II transcription subunit 9 (144 aa).

A coiled-coil region spans residues 85–143; it reads QDCNHKIFELQKRFESAREQIRQLPGIDFNKEEQQQRLELLRNQLKLKQQLIRKYKDTE.

Belongs to the Mediator complex subunit 9 family. As to quaternary structure, component of the Mediator complex.

It is found in the nucleus. Component of the Mediator complex, a coactivator involved in the regulated transcription of nearly all RNA polymerase II-dependent genes. Mediator functions as a bridge to convey information from gene-specific regulatory proteins to the basal RNA polymerase II transcription machinery. Mediator is recruited to promoters by direct interactions with regulatory proteins and serves as a scaffold for the assembly of a functional preinitiation complex with RNA polymerase II and the general transcription factors. The sequence is that of Mediator of RNA polymerase II transcription subunit 9 (MED9) from Drosophila melanogaster (Fruit fly).